Reading from the N-terminus, the 262-residue chain is MLLIDAGNTRSKFAWWDADTDKIEILGAIPHQSWLNDLSQPLKDLLLEVVSSRQLEREQQAIGCSVAAVQVMDTLNSSLAELGIKVFWQKTRAQQAGVTNGYTKEPERLGSDRWMALLGCHEQVKQNALIVDAGTALTIDWLMADGRHLGGWIVPGRQLMLNALGQGTANLKGITVNDIERDGLAAGLDTFDGITQGAEAALTGAIAQAIQLSGRYFSDQPFDVVVTGGDGEHLMRTLSVEFCRYDDLLFKGLRLCADNLNS.

5–12 (DAGNTRSK) is an ATP binding site. Substrate is bound by residues Tyr102 and 110 to 113 (GSDR). Asp112 functions as the Proton acceptor in the catalytic mechanism. Asp132 contacts K(+). Thr135 lines the ATP pocket. A substrate-binding site is contributed by Thr190.

This sequence belongs to the type III pantothenate kinase family. Homodimer. NH4(+) serves as cofactor. K(+) is required as a cofactor.

The protein resides in the cytoplasm. The catalysed reaction is (R)-pantothenate + ATP = (R)-4'-phosphopantothenate + ADP + H(+). The protein operates within cofactor biosynthesis; coenzyme A biosynthesis; CoA from (R)-pantothenate: step 1/5. Its function is as follows. Catalyzes the phosphorylation of pantothenate (Pan), the first step in CoA biosynthesis. The chain is Type III pantothenate kinase from Idiomarina loihiensis (strain ATCC BAA-735 / DSM 15497 / L2-TR).